Here is a 737-residue protein sequence, read N- to C-terminus: NAD(P)H-quinone oxidoreductase subunit 5, chloroplastic (737 aa).

The next 16 membrane-spanning stretches (helical) occupy residues 9–29 (WIIPFIPLPVPMLIGAGLILF), 40–60 (WAFQSVLLLSIVMIFSIYLSI), 89–109 (IDPLTSIMSILITTVGIMVLI), 125–145 (FAYMSFFSTSMLGLVTSSNLI), 147–167 (IYIFWELVGLCSYLLIGFWFT), 185–205 (GDFGLLLGILGFYWITGSFEF), 219–239 (NELNFLFVTLCAVLLFAGAVA), 258–278 (TPISALIHAATMVAAGIFLVA), 286–306 (VIPYIMYLISVIGIITVLLGA), 327–347 (LGYMMLALGMGSYRSALFHLI), 354–374 (ALLFLGSGSIIHSMETIVGYS), 396–416 (ITFLLGTLSLCGIPPLACFWS), 425–445 (WLYSPIFAIIAWATAGLTAFY), 543–563 (LFPIFVLGLFTLFVGAIGIPF), 602–622 (VVSVSIAYFGIFIASFLYKPI), and 717–737 (SYLFLYLAYVSVFLLVYYLLF).

Belongs to the complex I subunit 5 family. As to quaternary structure, NDH is composed of at least 16 different subunits, 5 of which are encoded in the nucleus.

The protein localises to the plastid. Its subcellular location is the chloroplast thylakoid membrane. It carries out the reaction a plastoquinone + NADH + (n+1) H(+)(in) = a plastoquinol + NAD(+) + n H(+)(out). The enzyme catalyses a plastoquinone + NADPH + (n+1) H(+)(in) = a plastoquinol + NADP(+) + n H(+)(out). NDH shuttles electrons from NAD(P)H:plastoquinone, via FMN and iron-sulfur (Fe-S) centers, to quinones in the photosynthetic chain and possibly in a chloroplast respiratory chain. The immediate electron acceptor for the enzyme in this species is believed to be plastoquinone. Couples the redox reaction to proton translocation, and thus conserves the redox energy in a proton gradient. The protein is NAD(P)H-quinone oxidoreductase subunit 5, chloroplastic (ndhF) of Solanum lycopersicum (Tomato).